An 878-amino-acid polypeptide reads, in one-letter code: Pyruvate, phosphate dikinase (878 aa).

Positions 1–347 are N-terminal; the sequence is MKKLIYYFGS…LYILQTRTAK (347 aa). ATP is bound at residue R96. Positions 348–404 are linker 1; that stretch reads RTAIAAINIAVQMVEEKLISKEQALMRIDPESLNQLLHTRIDYSKGLTSIAEGLPAS. The interval 405 to 502 is central; that stretch reads PGAATGIAVF…VIKQGDIITI (98 aa). The residue at position 457 (T457) is a Phosphothreonine; by PDRP1. The Tele-phosphohistidine intermediate role is filled by H459. The tract at residues 503–537 is linker 2; it reads DGGSGKIFLGEMPLIQPTFSEESKLILDWADEISS. Residues 538-878 are C-terminal; it reads LKVRANAETV…ASAQAKIKHG (341 aa). Residues R565, R621, E749, G770, T771, N772, and D773 each contribute to the substrate site. Position 749 (E749) interacts with Mg(2+). Residue D773 coordinates Mg(2+). The active-site Proton donor is the C835.

Belongs to the PEP-utilizing enzyme family. Homodimer. The cofactor is Mg(2+). Post-translationally, phosphorylation of Thr-457 in the dark inactivates the enzyme. Dephosphorylation upon light stimulation reactivates the enzyme.

The enzyme catalyses pyruvate + phosphate + ATP = phosphoenolpyruvate + AMP + diphosphate + H(+). With respect to regulation, activated by light-induced dephosphorylation. Inhibited by dark-induced phosphorylation. Both reactions are catalyzed by PDRP1. Its function is as follows. Catalyzes the reversible phosphorylation of pyruvate and phosphate. This chain is Pyruvate, phosphate dikinase (ppdK), found in Rickettsia felis (strain ATCC VR-1525 / URRWXCal2) (Rickettsia azadi).